A 471-amino-acid polypeptide reads, in one-letter code: Putative multidrug resistance protein MdtD (471 aa).

The next 13 membrane-spanning stretches (helical) occupy residues Leu12 to Ala32, Met49 to Ala69, Ile77 to Thr97, Val102 to Met124, Phe138 to Val158, Trp165 to Met185, Leu197 to Ser217, Leu222 to Leu242, Phe263 to Met283, Val286 to Met306, Leu342 to Leu362, Met396 to Phe416, and Val431 to Ala451.

This sequence belongs to the major facilitator superfamily. TCR/Tet family.

It localises to the cell inner membrane. The chain is Putative multidrug resistance protein MdtD from Citrobacter koseri (strain ATCC BAA-895 / CDC 4225-83 / SGSC4696).